The chain runs to 175 residues: Inorganic pyrophosphatase (175 aa).

Residues Lys-30, Arg-44, and Tyr-56 each contribute to the substrate site. Mg(2+) is bound by residues Asp-66, Asp-71, and Asp-103. Substrate is bound at residue Tyr-142.

The protein belongs to the PPase family. Homohexamer. Requires Mg(2+) as cofactor.

It is found in the cytoplasm. It carries out the reaction diphosphate + H2O = 2 phosphate + H(+). Catalyzes the hydrolysis of inorganic pyrophosphate (PPi) forming two phosphate ions. This chain is Inorganic pyrophosphatase, found in Ralstonia nicotianae (strain ATCC BAA-1114 / GMI1000) (Ralstonia solanacearum).